The following is a 445-amino-acid chain: Homogentisate 1,2-dioxygenase (445 aa).

Residue Lys98 is modified to N6-acetyllysine. The Fe cation site is built by His335, Glu341, and His371. Position 414 is an N6-succinyllysine (Lys414).

The protein belongs to the homogentisate dioxygenase family. As to quaternary structure, homohexamer arranged as a dimer of trimers. Requires Fe cation as cofactor. As to expression, highest expression in the prostate, small intestine, colon, kidney and liver.

The enzyme catalyses homogentisate + O2 = 4-maleylacetoacetate + H(+). It participates in amino-acid degradation; L-phenylalanine degradation; acetoacetate and fumarate from L-phenylalanine: step 4/6. In terms of biological role, catalyzes the conversion of homogentisate to maleylacetoacetate. The polypeptide is Homogentisate 1,2-dioxygenase (HGD) (Homo sapiens (Human)).